Here is a 190-residue protein sequence, read N- to C-terminus: Threonylcarbamoyl-AMP synthase (190 aa).

Residues 7 to 190 (LSSLIKCIRK…IVNGKLIRYV (184 aa)) enclose the YrdC-like domain.

This sequence belongs to the SUA5 family. TsaC subfamily.

The protein localises to the cytoplasm. It catalyses the reaction L-threonine + hydrogencarbonate + ATP = L-threonylcarbamoyladenylate + diphosphate + H2O. Its function is as follows. Required for the formation of a threonylcarbamoyl group on adenosine at position 37 (t(6)A37) in tRNAs that read codons beginning with adenine. Catalyzes the conversion of L-threonine, HCO(3)(-)/CO(2) and ATP to give threonylcarbamoyl-AMP (TC-AMP) as the acyladenylate intermediate, with the release of diphosphate. In Buchnera aphidicola subsp. Schizaphis graminum (strain Sg), this protein is Threonylcarbamoyl-AMP synthase.